The primary structure comprises 407 residues: tRNA pseudouridine synthase Pus10 (407 aa).

D232 acts as the Nucleophile in catalysis. 2 residues coordinate substrate: Y300 and Y369.

Belongs to the pseudouridine synthase Pus10 family.

It carries out the reaction uridine(54) in tRNA = pseudouridine(54) in tRNA. The enzyme catalyses uridine(55) in tRNA = pseudouridine(55) in tRNA. In terms of biological role, responsible for synthesis of pseudouridine from uracil-54 and uracil-55 in the psi GC loop of transfer RNAs. The protein is tRNA pseudouridine synthase Pus10 of Methanosphaera stadtmanae (strain ATCC 43021 / DSM 3091 / JCM 11832 / MCB-3).